We begin with the raw amino-acid sequence, 488 residues long: MTNKARLRFAPSPTGQIHIGNIRTALFNWLYSRHIDGEFILRVEDTDMNRSVEEYEQIIFRALSWLGLDWDEGPQKGGDFGPYRQSERKDIYHKYANKLLEAGKAYYCYCTEEELEEMREAQRARGEMPRYSGKCADLSSEERAELENEGRKSVIRFKVPENQTIRVNDLVKGEVDFESDGIGDFILIKSDDMASYNFACVVDDYLMNITHVLRGEDHLSNTPKQVMIYEALGFETPEFGHLSLILGPDKAKLSKRHGDTFIGEYREKGYLPEAMVNFLALLGWSPPGEDELFTQDELIRLFDIGRVSKSAAVFDVDKLNWMNSHYIKEADTERLLNLSKEYLINSDLVSQEQLEHDWEWFVSAVDLVKEKIDMLSELPPQLKIFYGDDVDLKGEEVEFLEKDHVPELLSEVINQFNDLDSFEDPKAIKKAVNKAGKQVGVKGKQLFMPVRIAVSGQMHGPELDQLISLLGRERAINRVNSTLSQIQS.

The 'HIGH' region signature appears at 11-21 (PSPTGQIHIGN). Zn(2+) contacts are provided by cysteine 108, cysteine 110, cysteine 135, and aspartate 137. Positions 252–256 (KLSKR) match the 'KMSKS' region motif. An ATP-binding site is contributed by lysine 255.

It belongs to the class-I aminoacyl-tRNA synthetase family. Glutamate--tRNA ligase type 1 subfamily. Monomer. Zn(2+) is required as a cofactor.

It is found in the cytoplasm. It catalyses the reaction tRNA(Glu) + L-glutamate + ATP = L-glutamyl-tRNA(Glu) + AMP + diphosphate. Its function is as follows. Catalyzes the attachment of glutamate to tRNA(Glu) in a two-step reaction: glutamate is first activated by ATP to form Glu-AMP and then transferred to the acceptor end of tRNA(Glu). The sequence is that of Glutamate--tRNA ligase from Natranaerobius thermophilus (strain ATCC BAA-1301 / DSM 18059 / JW/NM-WN-LF).